Here is a 625-residue protein sequence, read N- to C-terminus: Probable potassium transport system protein Kup (625 aa).

12 helical membrane-spanning segments follow: residues 13–33, 53–73, 103–123, 141–161, 172–192, 206–226, 250–270, 282–302, 340–360, 369–389, 400–420, and 422–442; these read TALA…LYAL, ILSI…VAIV, IYMI…GIIT, VFDP…FLVQ, FGPI…HSVI, AIQF…AVVL, WFFV…ALLL, LLVP…ATVI, IYVP…ILIF, AYGL…AVFI, VLIL…ATSL, and ILSG…ILMT.

It belongs to the HAK/KUP transporter (TC 2.A.72) family.

It localises to the cell inner membrane. It catalyses the reaction K(+)(in) + H(+)(in) = K(+)(out) + H(+)(out). Functionally, transport of potassium into the cell. Likely operates as a K(+):H(+) symporter. This Acinetobacter baumannii (strain SDF) protein is Probable potassium transport system protein Kup.